Reading from the N-terminus, the 307-residue chain is 4-hydroxythreonine-4-phosphate dehydrogenase (307 aa).

His-126 and Thr-127 together coordinate substrate. A divalent metal cation contacts are provided by His-156, His-195, and His-251. The substrate site is built by Lys-259, Asn-268, and Arg-277.

Belongs to the PdxA family. As to quaternary structure, homodimer. Zn(2+) serves as cofactor. It depends on Mg(2+) as a cofactor. Requires Co(2+) as cofactor.

The protein localises to the cytoplasm. It catalyses the reaction 4-(phosphooxy)-L-threonine + NAD(+) = 3-amino-2-oxopropyl phosphate + CO2 + NADH. It functions in the pathway cofactor biosynthesis; pyridoxine 5'-phosphate biosynthesis; pyridoxine 5'-phosphate from D-erythrose 4-phosphate: step 4/5. Catalyzes the NAD(P)-dependent oxidation of 4-(phosphooxy)-L-threonine (HTP) into 2-amino-3-oxo-4-(phosphooxy)butyric acid which spontaneously decarboxylates to form 3-amino-2-oxopropyl phosphate (AHAP). In Helicobacter pylori (strain ATCC 700392 / 26695) (Campylobacter pylori), this protein is 4-hydroxythreonine-4-phosphate dehydrogenase.